The primary structure comprises 203 residues: ATP-dependent Clp protease proteolytic subunit 1 (203 aa).

Ser103 acts as the Nucleophile in catalysis. Residue His128 is part of the active site.

This sequence belongs to the peptidase S14 family. Fourteen ClpP subunits assemble into 2 heptameric rings which stack back to back to give a disk-like structure with a central cavity, resembling the structure of eukaryotic proteasomes.

The protein resides in the cytoplasm. It catalyses the reaction Hydrolysis of proteins to small peptides in the presence of ATP and magnesium. alpha-casein is the usual test substrate. In the absence of ATP, only oligopeptides shorter than five residues are hydrolyzed (such as succinyl-Leu-Tyr-|-NHMec, and Leu-Tyr-Leu-|-Tyr-Trp, in which cleavage of the -Tyr-|-Leu- and -Tyr-|-Trp bonds also occurs).. In terms of biological role, cleaves peptides in various proteins in a process that requires ATP hydrolysis. Has a chymotrypsin-like activity. Plays a major role in the degradation of misfolded proteins. The protein is ATP-dependent Clp protease proteolytic subunit 1 of Treponema pallidum (strain Nichols).